The primary structure comprises 418 residues: ATP phosphoribosyltransferase regulatory subunit (418 aa).

It belongs to the class-II aminoacyl-tRNA synthetase family. HisZ subfamily. In terms of assembly, heteromultimer composed of HisG and HisZ subunits.

The protein localises to the cytoplasm. It functions in the pathway amino-acid biosynthesis; L-histidine biosynthesis; L-histidine from 5-phospho-alpha-D-ribose 1-diphosphate: step 1/9. In terms of biological role, required for the first step of histidine biosynthesis. May allow the feedback regulation of ATP phosphoribosyltransferase activity by histidine. In Halothermothrix orenii (strain H 168 / OCM 544 / DSM 9562), this protein is ATP phosphoribosyltransferase regulatory subunit.